A 195-amino-acid polypeptide reads, in one-letter code: Penicillin-binding protein activator LpoB (195 aa).

The first 16 residues, 1 to 16, serve as a signal peptide directing secretion; it reads MKKRALIVLAALVLAS. C17 carries N-palmitoyl cysteine lipidation. The S-diacylglycerol cysteine moiety is linked to residue C17. The tract at residues 19–51 is disordered; it reads SRKPASPPAPIEPVPPPVTVSVQPPPPATSEPV. Over residues 23 to 51 the composition is skewed to pro residues; the sequence is ASPPAPIEPVPPPVTVSVQPPPPATSEPV.

This sequence belongs to the LpoB family. In terms of assembly, interacts with PBP1b.

Its subcellular location is the cell outer membrane. Regulator of peptidoglycan synthesis that is essential for the function of penicillin-binding protein 1B (PBP1b). This is Penicillin-binding protein activator LpoB from Sodalis glossinidius (strain morsitans).